Reading from the N-terminus, the 346-residue chain is Putative [LysW]-L-2-aminoadipate/[LysW]-L-glutamate phosphate reductase (346 aa).

Position 12-15 (12-15 (SGFT)) interacts with NADP(+). Cys147 is an active-site residue. An NADP(+)-binding site is contributed by Asn310.

It belongs to the NAGSA dehydrogenase family. Type 1 subfamily. LysY sub-subfamily.

Its subcellular location is the cytoplasm. It catalyses the reaction [amino-group carrier protein]-C-terminal-N-(1-carboxy-5-oxopentan-1-yl)-L-glutamine + phosphate + NADP(+) = [amino-group carrier protein]-C-terminal-N-(1-carboxy-5-phosphooxy-5-oxopentan-1-yl)-L-glutamine + NADPH + H(+). The catalysed reaction is [amino-group carrier protein]-C-terminal-gamma-(L-glutamyl-5-semialdehyde)-L-glutamate + phosphate + NADP(+) = [amino-group carrier protein]-C-terminal-gamma-(5-phospho-L-glutamyl)-L-glutamate + NADPH + H(+). It functions in the pathway amino-acid biosynthesis; L-lysine biosynthesis via AAA pathway; L-lysine from L-alpha-aminoadipate (Thermus route): step 3/5. Its pathway is amino-acid biosynthesis; L-arginine biosynthesis. Functionally, involved in both the arginine and lysine biosynthetic pathways. The chain is Putative [LysW]-L-2-aminoadipate/[LysW]-L-glutamate phosphate reductase from Natronomonas pharaonis (strain ATCC 35678 / DSM 2160 / CIP 103997 / JCM 8858 / NBRC 14720 / NCIMB 2260 / Gabara) (Halobacterium pharaonis).